The sequence spans 236 residues: Uridylate kinase (236 aa).

Lys12–Gly15 contributes to the ATP binding site. Residues Gly20 to Gly25 form an involved in allosteric activation by GTP region. Residue Gly54 coordinates UMP. ATP is bound by residues Gly55 and Arg59. UMP-binding positions include Asp72 and Thr133 to Thr140. Tyr166 and Asp169 together coordinate ATP.

This sequence belongs to the UMP kinase family. As to quaternary structure, homohexamer.

The protein localises to the cytoplasm. The catalysed reaction is UMP + ATP = UDP + ADP. Its pathway is pyrimidine metabolism; CTP biosynthesis via de novo pathway; UDP from UMP (UMPK route): step 1/1. Its activity is regulated as follows. Allosterically activated by GTP. Inhibited by UTP. Functionally, catalyzes the reversible phosphorylation of UMP to UDP. The chain is Uridylate kinase from Clostridium novyi (strain NT).